The sequence spans 661 residues: 3-hydroxypropionyl-coenzyme A synthetase (661 aa).

Asp526 is an active-site residue. N6-acetyllysine is present on Lys617.

It belongs to the ATP-dependent AMP-binding enzyme family. In terms of assembly, homotetramer.

The catalysed reaction is 3-hydroxypropanoate + ATP + CoA = 3-hydroxypropanoyl-CoA + AMP + diphosphate. Plays a role in the autotrophic CO(2) fixation pathway. Activates 3-hydroxypropionate to its CoA ester. Can also activate propionate, and to a lesser extent acrylate, acetate and butyrate. The sequence is that of 3-hydroxypropionyl-coenzyme A synthetase from Metallosphaera sedula (strain ATCC 51363 / DSM 5348 / JCM 9185 / NBRC 15509 / TH2).